We begin with the raw amino-acid sequence, 481 residues long: Proline--tRNA ligase (481 aa).

Belongs to the class-II aminoacyl-tRNA synthetase family. ProS type 3 subfamily. As to quaternary structure, homodimer.

It is found in the cytoplasm. It catalyses the reaction tRNA(Pro) + L-proline + ATP = L-prolyl-tRNA(Pro) + AMP + diphosphate. Functionally, catalyzes the attachment of proline to tRNA(Pro) in a two-step reaction: proline is first activated by ATP to form Pro-AMP and then transferred to the acceptor end of tRNA(Pro). This chain is Proline--tRNA ligase, found in Chlorobium phaeobacteroides (strain BS1).